The following is a 216-amino-acid chain: Phosphatidylserine decarboxylase proenzyme (216 aa).

Ser182 (schiff-base intermediate with substrate; via pyruvic acid) is an active-site residue. Position 182 is a pyruvic acid (Ser); by autocatalysis (Ser182).

Belongs to the phosphatidylserine decarboxylase family. PSD-A subfamily. As to quaternary structure, heterodimer of a large membrane-associated beta subunit and a small pyruvoyl-containing alpha subunit. The cofactor is pyruvate. In terms of processing, is synthesized initially as an inactive proenzyme. Formation of the active enzyme involves a self-maturation process in which the active site pyruvoyl group is generated from an internal serine residue via an autocatalytic post-translational modification. Two non-identical subunits are generated from the proenzyme in this reaction, and the pyruvate is formed at the N-terminus of the alpha chain, which is derived from the carboxyl end of the proenzyme. The post-translation cleavage follows an unusual pathway, termed non-hydrolytic serinolysis, in which the side chain hydroxyl group of the serine supplies its oxygen atom to form the C-terminus of the beta chain, while the remainder of the serine residue undergoes an oxidative deamination to produce ammonia and the pyruvoyl prosthetic group on the alpha chain.

It is found in the cell membrane. The enzyme catalyses a 1,2-diacyl-sn-glycero-3-phospho-L-serine + H(+) = a 1,2-diacyl-sn-glycero-3-phosphoethanolamine + CO2. The protein operates within phospholipid metabolism; phosphatidylethanolamine biosynthesis; phosphatidylethanolamine from CDP-diacylglycerol: step 2/2. Functionally, catalyzes the formation of phosphatidylethanolamine (PtdEtn) from phosphatidylserine (PtdSer). The polypeptide is Phosphatidylserine decarboxylase proenzyme (Burkholderia mallei (strain NCTC 10247)).